The following is a 250-amino-acid chain: Ubiquinone/menaquinone biosynthesis C-methyltransferase UbiE (250 aa).

S-adenosyl-L-methionine is bound by residues Thr-73, Asp-94, 122-123 (NA), and Ser-139.

This sequence belongs to the class I-like SAM-binding methyltransferase superfamily. MenG/UbiE family.

The enzyme catalyses a 2-demethylmenaquinol + S-adenosyl-L-methionine = a menaquinol + S-adenosyl-L-homocysteine + H(+). It catalyses the reaction a 2-methoxy-6-(all-trans-polyprenyl)benzene-1,4-diol + S-adenosyl-L-methionine = a 5-methoxy-2-methyl-3-(all-trans-polyprenyl)benzene-1,4-diol + S-adenosyl-L-homocysteine + H(+). It participates in quinol/quinone metabolism; menaquinone biosynthesis; menaquinol from 1,4-dihydroxy-2-naphthoate: step 2/2. It functions in the pathway cofactor biosynthesis; ubiquinone biosynthesis. Methyltransferase required for the conversion of demethylmenaquinol (DMKH2) to menaquinol (MKH2) and the conversion of 2-polyprenyl-6-methoxy-1,4-benzoquinol (DDMQH2) to 2-polyprenyl-3-methyl-6-methoxy-1,4-benzoquinol (DMQH2). The protein is Ubiquinone/menaquinone biosynthesis C-methyltransferase UbiE of Francisella tularensis subsp. mediasiatica (strain FSC147).